A 390-amino-acid polypeptide reads, in one-letter code: Argininosuccinate synthase (390 aa).

6–14 (AYSGGLDTT) serves as a coordination point for ATP. L-citrulline is bound at residue Y84. Residue G114 coordinates ATP. Residues T116, N120, and D121 each contribute to the L-aspartate site. N120 contacts L-citrulline. 5 residues coordinate L-citrulline: R124, S171, S180, E253, and Y265.

It belongs to the argininosuccinate synthase family. Type 1 subfamily. In terms of assembly, homotetramer.

The protein localises to the cytoplasm. It catalyses the reaction L-citrulline + L-aspartate + ATP = 2-(N(omega)-L-arginino)succinate + AMP + diphosphate + H(+). It functions in the pathway amino-acid biosynthesis; L-arginine biosynthesis; L-arginine from L-ornithine and carbamoyl phosphate: step 2/3. The chain is Argininosuccinate synthase from Sulfurisphaera tokodaii (strain DSM 16993 / JCM 10545 / NBRC 100140 / 7) (Sulfolobus tokodaii).